The chain runs to 227 residues: uncharacterized protein (227 aa).

The next 4 helical transmembrane spans lie at 17 to 37, 79 to 99, 112 to 132, and 181 to 201; these read VGIK…GVFS, GFLF…IISI, LMTP…LALI, and VAVF…ILVF.

It localises to the cell membrane. This is an uncharacterized protein from Escherichia coli (strain K12).